The following is a 326-amino-acid chain: Heterodimeric geranylgeranyl pyrophosphate synthase small subunit, chloroplastic (326 aa).

The transit peptide at 1 to 33 directs the protein to the chloroplast; sequence MLFSGSAIPLSSFCSLPEKPHTLPMKLSPAAIR. Lys88 and His120 together coordinate isopentenyl diphosphate. Asp127 and Asp133 together coordinate Mg(2+). Residue Arg138 participates in dimethylallyl diphosphate binding. Position 139 (Arg139) interacts with isopentenyl diphosphate. The dimethylallyl diphosphate site is built by Lys220 and Gln258. Residues 274–301 adopt a coiled-coil conformation; that stretch reads GAEKGMMEMAEELKEKAKKELQVFDNKY.

It belongs to the FPP/GGPP synthase family. As to quaternary structure, part of a heterodimeric geranyl(geranyl)diphosphate synthase. Interacts with GGPPS1 or GGPPS2, but not with GGPPS9. Interacts with LIL3.1 and LIL3.2. Requires Mg(2+) as cofactor. Expressed ubiquitously.

Its subcellular location is the plastid. It is found in the chloroplast thylakoid membrane. Functionally, heterodimeric geranyl(geranyl)-diphosphate (GPP) synthase small subunit. The small subunit alone is inactive in vitro while the large subunit GGPPS1 catalyzes mainly the production of geranygeranyl-diphosphate in vitro. Upon association of the two subunits, the product profile changes and the production of gerany-diphosphate is strongly increased. The protein is Heterodimeric geranylgeranyl pyrophosphate synthase small subunit, chloroplastic (GGR) of Arabidopsis thaliana (Mouse-ear cress).